The chain runs to 531 residues: Basal body-orientation factor 1 (531 aa).

Basic residues predominate over residues 1 to 19; it reads MPKLKVKAGKGKKGKRKKA. The disordered stretch occupies residues 1 to 32; the sequence is MPKLKVKAGKGKKGKRKKAGKNEHRLDKESEV. A compositionally biased stretch (basic and acidic residues) spans 20-32; it reads GKNEHRLDKESEV. 2 coiled-coil regions span residues 26–213 and 274–365; these read LDKE…AEKA and VQEK…VESF. The disordered stretch occupies residues 465-505; the sequence is QSRKSPGLKPSPPADVSSIKEKEINTSNLEEKPEESSSTFI. The span at 482 to 499 shows a compositional bias: basic and acidic residues; the sequence is SIKEKEINTSNLEEKPEE.

This sequence belongs to the BBOF1 family. As to expression, multiciliated cells.

It localises to the cytoplasm. It is found in the cytoskeleton. The protein localises to the cilium basal body. Basal body protein required in multiciliate cells to align and maintain cilia orientation in response to flow. May act by mediating a maturation step that stabilizes and aligns cilia orientation. Not required to respond to planar cell polarity (PCP) or flow-based orientation cues. The sequence is that of Basal body-orientation factor 1 (ccdc176) from Xenopus laevis (African clawed frog).